Reading from the N-terminus, the 219-residue chain is N-(5'-phosphoribosyl)anthranilate isomerase (219 aa).

This sequence belongs to the TrpF family.

The enzyme catalyses N-(5-phospho-beta-D-ribosyl)anthranilate = 1-(2-carboxyphenylamino)-1-deoxy-D-ribulose 5-phosphate. It functions in the pathway amino-acid biosynthesis; L-tryptophan biosynthesis; L-tryptophan from chorismate: step 3/5. In Bradyrhizobium sp. (strain BTAi1 / ATCC BAA-1182), this protein is N-(5'-phosphoribosyl)anthranilate isomerase.